Consider the following 205-residue polypeptide: Protein TGAM_1450 (205 aa).

Residues 7 to 201 (EWGEFLVRLA…EEYPRGPVRR (195 aa)) enclose the AMMECR1 domain.

The protein is Protein TGAM_1450 of Thermococcus gammatolerans (strain DSM 15229 / JCM 11827 / EJ3).